A 540-amino-acid chain; its full sequence is Homoserine O-acetyltransferase (540 aa).

The region spanning 66–404 (NVILICHALT…QHGHDAFLLE (339 aa)) is the AB hydrolase-1 domain. S171 serves as the catalytic Nucleophile. A substrate-binding site is contributed by R240. A disordered region spans residues 262–284 (QDTDKSGIKGTTGTEGKNSSEIS). Catalysis depends on residues D365 and H398. D399 lines the substrate pocket. 2 consecutive CBS domains span residues 425–484 (MNRN…ELDE) and 486–540 (ITRD…GKYD).

It belongs to the AB hydrolase superfamily. MetX family. Homodimer.

It localises to the cytoplasm. It catalyses the reaction L-homoserine + acetyl-CoA = O-acetyl-L-homoserine + CoA. It functions in the pathway amino-acid biosynthesis; L-methionine biosynthesis via de novo pathway; O-acetyl-L-homoserine from L-homoserine: step 1/1. Its function is as follows. Transfers an acetyl group from acetyl-CoA to L-homoserine, forming acetyl-L-homoserine. In vitro, can also use propionyl-CoA or butiryl-CoA as acyl donor. The chain is Homoserine O-acetyltransferase from Methanosarcina acetivorans (strain ATCC 35395 / DSM 2834 / JCM 12185 / C2A).